Here is a 460-residue protein sequence, read N- to C-terminus: MSPCKLLPFCVALALTGCSLAPDYQRPAMPVPQQFSLSQNGLVNAADNYQNAGWRTFFVDNQVKTLISEALENNRDLRMATLKVQEARAQYRLTDADRYPQLNGEGSGSWSGNLKGDSATTREFSTGLNASFDLDFFGRLKNMSEAERQNYLATEEAQRAVHILLVSNVAQSYFNQQLAYAQLQIAEETLRNYQQSYAFVEKQLLTGSSNVLALEQARGVIESTRSDIAKRQGELAQANNALQLLLGSYGKLPQAQTVNSDSLQSVKLPAGLSSQILLQRPDIMEAEHALMAANANIGAARAAFFPSISLTSGISTASSDLSSLFNASSGMWNFIPKIEIPIFNAGRNQANLDIAEIRQQQSVVNYEQKIQNAFKEVADALALRQSLNDQISAQQRYLASLQITLQRARALYQHGAVSYLEVLDAERSLFATRQTVLDLNYARQVNEISLYTALGGGWQQ.

Positions 1–17 (MSPCKLLPFCVALALTG) are cleaved as a signal peptide. Residue C18 is the site of N-palmitoyl cysteine attachment. C18 carries the S-diacylglycerol cysteine lipid modification.

This sequence belongs to the outer membrane factor (OMF) (TC 1.B.17) family. As to quaternary structure, homotrimer. Component of the cus efflux system composed of CusA, CusB, CusC and CusF.

It localises to the cell outer membrane. Forms pores that allow passive diffusion of cations across the outer membrane. Part of a cation efflux system that mediates resistance to copper and silver. This chain is Cation efflux system protein CusC (cusC), found in Escherichia coli O157:H7.